Here is a 485-residue protein sequence, read N- to C-terminus: Glutamyl-tRNA(Gln) amidotransferase subunit A (485 aa).

Active-site charge relay system residues include Lys78 and Ser153. The active-site Acyl-ester intermediate is Ser177.

The protein belongs to the amidase family. GatA subfamily. In terms of assembly, heterotrimer of A, B and C subunits.

It catalyses the reaction L-glutamyl-tRNA(Gln) + L-glutamine + ATP + H2O = L-glutaminyl-tRNA(Gln) + L-glutamate + ADP + phosphate + H(+). Allows the formation of correctly charged Gln-tRNA(Gln) through the transamidation of misacylated Glu-tRNA(Gln) in organisms which lack glutaminyl-tRNA synthetase. The reaction takes place in the presence of glutamine and ATP through an activated gamma-phospho-Glu-tRNA(Gln). This Syntrophus aciditrophicus (strain SB) protein is Glutamyl-tRNA(Gln) amidotransferase subunit A.